The following is a 298-amino-acid chain: Protease HtpX homolog (298 aa).

A run of 2 helical transmembrane segments spans residues 14–34 and 39–59; these read VVLLVVFFALLALIGASAGYL and YAMGLVLALVIGVIYATSMIF. A Zn(2+)-binding site is contributed by His143. Glu144 is an active-site residue. His147 serves as a coordination point for Zn(2+). 2 helical membrane-spanning segments follow: residues 158–178 and 197–217; these read IAVALASAVTVISSIGGRMLW and IITLLLSLLSLLLAPLVASLI. Position 226 (Glu226) interacts with Zn(2+).

Belongs to the peptidase M48B family. The cofactor is Zn(2+).

The protein resides in the cell membrane. This is Protease HtpX homolog from Streptococcus pyogenes serotype M1.